We begin with the raw amino-acid sequence, 292 residues long: Probable E3 ubiquitin-protein ligase RNF144A (292 aa).

The segment at proline 16–leucine 236 is TRIAD supradomain. Zn(2+)-binding residues include cysteine 20, cysteine 23, cysteine 43, cysteine 46, cysteine 111, cysteine 116, cysteine 135, cysteine 138, cysteine 143, cysteine 146, histidine 151, cysteine 156, cysteine 185, and cysteine 188. The segment at cysteine 20–cysteine 70 adopts an RING-type 1 zinc-finger fold. Residues glutamine 91–cysteine 156 form an IBR-type zinc finger. Residues cysteine 185–cysteine 214 form an RING-type 2; atypical zinc finger. The active site involves cysteine 198. Zn(2+)-binding residues include cysteine 203, cysteine 206, cysteine 211, cysteine 214, histidine 226, and cysteine 232. The helical transmembrane segment at valine 250–leucine 270 threads the bilayer.

It belongs to the RBR family. RNF144 subfamily.

The protein localises to the membrane. It carries out the reaction [E2 ubiquitin-conjugating enzyme]-S-ubiquitinyl-L-cysteine + [acceptor protein]-L-lysine = [E2 ubiquitin-conjugating enzyme]-L-cysteine + [acceptor protein]-N(6)-ubiquitinyl-L-lysine.. It functions in the pathway protein modification; protein ubiquitination. Functionally, E3 ubiquitin-protein ligase which accepts ubiquitin from E2 ubiquitin-conjugating enzymes ube2l3 and ube2l6 in the form of a thioester and then directly transfers the ubiquitin to targeted substrates. This Xenopus tropicalis (Western clawed frog) protein is Probable E3 ubiquitin-protein ligase RNF144A (rnf144a).